The sequence spans 352 residues: C5a anaphylatoxin chemotactic receptor 1 (352 aa).

Polar residues predominate over residues 1 to 11 (MDPISNDSSEI). Positions 1-20 (MDPISNDSSEITYDYSDGTP) are disordered. The Extracellular segment spans residues 1-38 (MDPISNDSSEITYDYSDGTPNPDMPADGVYIPKMEPGD). An N-linked (GlcNAc...) asparagine glycan is attached at N6. Y13 and Y15 each carry sulfotyrosine. A helical membrane pass occupies residues 39–65 (IAALIIYLAVFLVGVTGNALVVWVTAF). Topologically, residues 66-70 (EAKRT) are cytoplasmic. Residues 71–94 (VNAIWFLNLAVADLLSCLALPILF) traverse the membrane as a helical segment. The Extracellular portion of the chain corresponds to 95 to 111 (TSIVKHNHWPFGDQACI). Residues C110 and C189 are joined by a disulfide bond. Residues 112-133 (VLPSLILLNMYSSILLLATISA) form a helical membrane-spanning segment. Residues 134–154 (DRFLLVFKPIWCQKFRRPGLA) lie on the Cytoplasmic side of the membrane. Residues 155–175 (WMACGVTWVLALLLTIPSFVF) form a helical membrane-spanning segment. Topologically, residues 176 to 202 (RRIHKDPYSDSILCNIDYSKGPFFIEK) are extracellular. The helical transmembrane segment at 203–228 (AIAILRLMVGFVLPLLTLNICYTFLL) threads the bilayer. Residues 229–244 (IRTWSRKATRSTKTLK) lie on the Cytoplasmic side of the membrane. Residues 245-267 (VVMAVVTCFFVFWLPYQVTGVIL) form a helical membrane-spanning segment. Topologically, residues 268 to 284 (AWLPRSSSTFQSVERLN) are extracellular. A helical transmembrane segment spans residues 285–305 (SLCVSLAYINCCVNPIIYVMA). At 306–352 (GQGFHGRLRRSLPSIIRNVLSEDSLGRDSKSFTRSTMDTSTQKSQAV) the chain is on the cytoplasmic side. Phosphoserine is present on residues S316, S319, S326, S329, S334, S336, and S340. The interval 332 to 352 (RDSKSFTRSTMDTSTQKSQAV) is disordered. Residues 337–352 (FTRSTMDTSTQKSQAV) are compositionally biased toward polar residues.

Belongs to the G-protein coupled receptor 1 family. Homodimer. May also form higher-order oligomers. Interacts (when phosphorylated) with ARRB1 and ARRB2; the interaction is associated with internalization of C5aR. Post-translationally, sulfation plays a critical role in the association of C5aR with C5a, but no significant role in the ability of the receptor to transduce a signal and mobilize calcium in response to a small peptide agonist. In terms of processing, phosphorylated on serine residues in response to C5a binding, resulting in internalization of the receptor and short-term desensitization to the ligand.

Its subcellular location is the cell membrane. The protein resides in the cytoplasmic vesicle. Its function is as follows. Receptor for the chemotactic and inflammatory peptide anaphylatoxin C5a. The ligand interacts with at least two sites on the receptor: a high-affinity site on the extracellular N-terminus, and a second site in the transmembrane region which activates downstream signaling events. Receptor activation stimulates chemotaxis, granule enzyme release, intracellular calcium release and superoxide anion production. The protein is C5a anaphylatoxin chemotactic receptor 1 (C5ar1) of Rattus norvegicus (Rat).